Consider the following 428-residue polypeptide: Sarcosine reductase complex component B subunit alpha (428 aa).

Cys-242 carries the post-translational modification Pyruvic acid (Cys).

Heterotetramer of two alpha and two beta subunits. Component of the sarcosine reductase complex, together with components A and C. PB is substrate specific. In terms of processing, the peptide chain is cleaved into beta and alpha chains, and the alpha chain N-terminal cysteine is deaminated and oxidized to form a reactive pyruvoyl group.

It catalyses the reaction acetyl phosphate + methylamine + [thioredoxin]-disulfide + H2O = sarcosine + [thioredoxin]-dithiol + phosphate + H(+). In the first step of sarcosine reductase, the substrate is bound to component PB via a Schiff base intermediate. Then the PB-activated substrate is nucleophilically attacked by the selenol anion of component PA to transform it to a carboxymethylated selenoether and the respective amine. By action of component PC, acetyl phosphate is formed, leaving component PA in its oxidized state. Finally component PA becomes reduced by the thioredoxin system to start a new catalytic cycle of reductive deamination. In Peptoclostridium acidaminophilum (Eubacterium acidaminophilum), this protein is Sarcosine reductase complex component B subunit alpha (grdG).